The following is a 139-amino-acid chain: Small ribosomal subunit protein uS12 (139 aa).

Aspartate 102 is modified (3-methylthioaspartic acid).

Belongs to the universal ribosomal protein uS12 family. In terms of assembly, part of the 30S ribosomal subunit. Contacts proteins S8 and S17. May interact with IF1 in the 30S initiation complex.

Its function is as follows. With S4 and S5 plays an important role in translational accuracy. Functionally, interacts with and stabilizes bases of the 16S rRNA that are involved in tRNA selection in the A site and with the mRNA backbone. Located at the interface of the 30S and 50S subunits, it traverses the body of the 30S subunit contacting proteins on the other side and probably holding the rRNA structure together. The combined cluster of proteins S8, S12 and S17 appears to hold together the shoulder and platform of the 30S subunit. This chain is Small ribosomal subunit protein uS12, found in Bacillus pumilus (strain SAFR-032).